The following is a 709-amino-acid chain: Early transcription factor 82 kDa subunit (709 aa).

The protein belongs to the poxviridae VETF large subunit family. Heterodimer of a 70 kDa and a 82 kDa subunit. Part of the early transcription complex composed of ETF, RAP94, and the DNA-directed RNA polymerase.

The protein localises to the virion. Functionally, acts with RNA polymerase to initiate transcription from early gene promoters. Is recruited by the RPO-associated protein of 94 kDa (RAP94) to form the early transcription complex, which also contains the core RNA polymerase. ETF heterodimer binds to early gene promoters. The protein is Early transcription factor 82 kDa subunit (VETFL) of Vertebrata (FPV).